Reading from the N-terminus, the 148-residue chain is Large ribosomal subunit protein uL15 (148 aa).

Residues 18–38 (GYGRVGKHRKHPGGRGNAGGL) are disordered.

This sequence belongs to the universal ribosomal protein uL15 family.

This Dictyostelium discoideum (Social amoeba) protein is Large ribosomal subunit protein uL15 (rpl27a).